Reading from the N-terminus, the 178-residue chain is Large ribosomal subunit protein eL20y (178 aa).

The protein belongs to the eukaryotic ribosomal protein eL20 family.

The chain is Large ribosomal subunit protein eL20y (RPL18AB) from Arabidopsis thaliana (Mouse-ear cress).